The following is a 101-amino-acid chain: Citrate lyase acyl carrier protein (101 aa).

Ser14 bears the O-(phosphoribosyl dephospho-coenzyme A)serine mark.

The protein belongs to the CitD family. Oligomer with a subunit composition of (alpha,beta,gamma)6.

The protein resides in the cytoplasm. Covalent carrier of the coenzyme of citrate lyase. The protein is Citrate lyase acyl carrier protein of Lacticaseibacillus casei (strain BL23) (Lactobacillus casei).